We begin with the raw amino-acid sequence, 1007 residues long: Serine/threonine-protein kinase PRP4 homolog (1007 aa).

The segment covering 1 to 10 (MAAAETQSLR) has biased composition (polar residues). The disordered stretch occupies residues 1–99 (MAAAETQSLR…EGMSPAKRTK (99 aa)). An N-acetylalanine modification is found at Ala-2. Residues Ser-8, Ser-20, Ser-23, and Ser-32 each carry the phosphoserine modification. 2 stretches are compositionally biased toward basic residues: residues 39-59 (KHSRHKKKKHKHRSKHKKHKH) and 67-81 (KKHKHKHKHKKHKRK). Residues 82 to 91 (EIIDASDKEG) are compositionally biased toward basic and acidic residues. A phosphoserine mark is found at Ser-87 and Ser-93. Residue Lys-99 is modified to N6-acetyllysine; alternate. Lys-99 is covalently cross-linked (Glycyl lysine isopeptide (Lys-Gly) (interchain with G-Cter in SUMO2); alternate). A Glycyl lysine isopeptide (Lys-Gly) (interchain with G-Cter in SUMO2) cross-link involves residue Lys-111. Lys-117 participates in a covalent cross-link: Glycyl lysine isopeptide (Lys-Gly) (interchain with G-Cter in SUMO2); alternate. Lys-117 participates in a covalent cross-link: Glycyl lysine isopeptide (Lys-Gly) (interchain with G-Cter in SUMO1); alternate. Ser-131 carries the phosphoserine modification. Tyr-140 carries the post-translational modification Phosphotyrosine. 2 disordered regions span residues 140-533 (YESG…EEED) and 559-583 (SNMSVPSEPSSPQSSTRTRSPSPDD). Phosphoserine is present on residues Ser-142, Ser-144, and Ser-166. Residues 157–168 (GNRSSTRSSSTK) show a composition bias toward low complexity. Residues Lys-170 and Lys-177 each participate in a glycyl lysine isopeptide (Lys-Gly) (interchain with G-Cter in SUMO2) cross-link. 2 stretches are compositionally biased toward basic residues: residues 179 to 202 (TTKKRSKSRSKERTRHRSDKKKSK) and 214 to 230 (RSKSKERKKSKSPSKRS). A phosphoserine mark is found at Ser-239, Ser-241, Ser-257, Ser-277, Ser-283, Ser-292, and Ser-294. Positions 247–270 (RSQEKIGKARSPTDDKVKIEDKSK) are enriched in basic and acidic residues. Residues 302–315 (SKDRRSRSKERKSK) are compositionally biased toward basic residues. Positions 316–325 (RSETDKEKKP) are enriched in basic and acidic residues. Residues Ser-328, Ser-354, Ser-356, Ser-366, and Ser-368 each carry the phosphoserine modification. Over residues 342 to 367 (PSRRPGRSPKRRSLSPKPRDKSRRSR) the composition is skewed to basic residues. Thr-385 carries the phosphothreonine modification. Residue Ser-387 is modified to Phosphoserine. Basic and acidic residues-rich tracts occupy residues 395-408 (RSLERKRREPERRR) and 415-429 (RPRDDILSRRERSKD). 3 positions are modified to phosphoserine: Ser-427, Ser-431, and Ser-437. A compositionally biased stretch (basic residues) spans 438-497 (PTRRRSRSPIRRRSRSPLRRSRSPRRRSRSPRRRDRGRRSRSRLRRRSRSRGGRRRRSRS). Phosphoserine occurs at positions 518, 519, 520, 565, 569, 578, and 580. The segment covering 518 to 533 (SSSDDNLEDFDVEEED) has biased composition (acidic residues). The span at 562–581 (SVPSEPSSPQSSTRTRSPSP) shows a compositional bias: low complexity. Glycyl lysine isopeptide (Lys-Gly) (interchain with G-Cter in SUMO2) cross-links involve residues Lys-593 and Lys-659. Residues 687–1006 (YNVYGYTGQG…ALQHAFIQEK (320 aa)) enclose the Protein kinase domain. ATP is bound by residues 693–701 (TGQGVFSNV) and Lys-717. Lys-717 carries the post-translational modification N6-acetyllysine. The active-site Proton acceptor is the Asp-815. Tyr-849 carries the post-translational modification Phosphotyrosine. Ser-852 is subject to Phosphoserine.

It belongs to the protein kinase superfamily. CMGC Ser/Thr protein kinase family. As to quaternary structure, interacts with CLK1 C-terminus. Associates with the U5 snRNP and NCOR1 deacetylase complexes. Identified in the spliceosome C complex. Post-translationally, phosphorylated by CLK1. Autophosphorylated; phosphorylation inhibits interaction with its targets, such as PRPF6 or SMARCA4. Ubiquitous.

The protein resides in the nucleus. It localises to the chromosome. Its subcellular location is the centromere. It is found in the kinetochore. The enzyme catalyses L-seryl-[protein] + ATP = O-phospho-L-seryl-[protein] + ADP + H(+). It catalyses the reaction L-threonyl-[protein] + ATP = O-phospho-L-threonyl-[protein] + ADP + H(+). Functionally, serine/threonine kinase involved in spliceosomal assembly as well as mitosis and signaling regulation. Connects chromatin mediated regulation of transcription and pre-mRNA splicing. During spliceosomal assembly, interacts with and phosphorylates PRPF6 and PRPF31, components of the U4/U6-U5 tri-small nuclear ribonucleoprotein (snRNP), to facilitate the formation of the spliceosome B complex. Plays a role in regulating transcription and the spindle assembly checkpoint (SAC). Associates with U5 snRNP and NCOR1 deacetylase complexes which may allow a coordination of pre-mRNA splicing with chromatin remodeling events involved in transcriptional regulation. Associates and probably phosphorylates SMARCA4 and NCOR1. Phosphorylates SRSF1. Associates with kinetochores during mitosis and is necessary for recruitment and maintenance of the checkpoint proteins such as MAD1L1 and MAD12L1 at the kinetochores. Phosphorylates and regulates the activity of the transcription factors such as ELK1 and KLF13. Phosphorylates nuclear YAP1 and WWTR1/TAZ which induces nuclear exclusion and regulates Hippo signaling pathway, involved in tissue growth control. The protein is Serine/threonine-protein kinase PRP4 homolog of Homo sapiens (Human).